Reading from the N-terminus, the 141-residue chain is Succinate dehydrogenase [ubiquinone] cytochrome b small subunit 2 (141 aa).

Residues M1 to T24 constitute a mitochondrion transit peptide. Over S25–F44 the chain is Mitochondrial matrix. The helical transmembrane segment at K45–F63 threads the bilayer. Over I64–A68 the chain is Mitochondrial intermembrane. The helical transmembrane segment at M69 to V89 threads the bilayer. H80 is a heme b binding site. Residues S90–R104 are Mitochondrial matrix-facing. Y92 serves as a coordination point for a ubiquinone. The helical transmembrane segment at V105–N126 threads the bilayer. Residues S127–L141 lie on the Mitochondrial intermembrane side of the membrane.

This sequence belongs to the CybS family. In terms of assembly, component of the mitochondrial electron transport chain complex II composed of four subunits: a flavoprotein (Fp), an iron-sulfur protein (Ip), and a large cytochrome b (CybL) subunit and a small cytochrome b (CybS) subunit. There are 2 developmental stage-specific forms of complex II which have the Ip and CybL subunits in common. Complex II from the free-living larvae (aerobic environment) acts as a succinate dehydrogenase and is composed of the common subunit Ip and CybL and the stage specific subunits FpL and CybSL. Complex II from parasitic larvae and adults (anaerobic environment) acts as a fumarate reductase and is composed of the common subunit Ip and CybL and the stage specific subunits FpA and CybSA. Heme b serves as cofactor.

The protein resides in the mitochondrion inner membrane. Its pathway is carbohydrate metabolism; tricarboxylic acid cycle; fumarate from succinate (eukaryal route): step 1/1. In terms of biological role, membrane-bound small subunit (CybS) of the mitochondrial electron transport chain complex II, which together with the membrane-bound large subunit (CybL), anchor the catalytic subunits to the inner mitochondria membrane. During the free-living egg-larvae stages, which occur in an aerobic environment, complex II acts as a succinate dehydrogenase by transferring electrons from succinate to ubiquinone. The polypeptide is Succinate dehydrogenase [ubiquinone] cytochrome b small subunit 2 (Ascaris suum (Pig roundworm)).